The sequence spans 199 residues: UPF0316 protein LA_0606 (199 aa).

2 helical membrane-spanning segments follow: residues 47 to 67 (IAASLGFLEVLLWVVVITQVI) and 73 to 93 (VFCYLAYAGGFATGTFIGMIL).

Belongs to the UPF0316 family.

It is found in the cell membrane. This is UPF0316 protein LA_0606 from Leptospira interrogans serogroup Icterohaemorrhagiae serovar Lai (strain 56601).